The primary structure comprises 391 residues: Metallophosphoesterase 1 (391 aa).

Residues 25–45 (TVVIISVLLFCEYFIYHLVIF) form a helical membrane-spanning segment. D72, D114, N152, H244, H298, and H300 together coordinate a divalent metal cation. A helical transmembrane segment spans residues 352-372 (VLATYGAAAVFLVVLILAHLE).

Belongs to the metallophosphoesterase superfamily. MPPE1 family. Interacts with GPI-anchor proteins (via the GPI portion). Interacts with TMED10. Mn(2+) serves as cofactor.

The protein resides in the endoplasmic reticulum-Golgi intermediate compartment membrane. In terms of biological role, metallophosphoesterase that catalyzes the removal of a side-chain ethanolamine-phosphate (EtNP) from the second mannose of the GPI-anchor protein intermediate. Participates in the glycan remodeling steps of GPI-anchor maturation to allow an efficient transport of GPI-anchor proteins from the endoplasmic reticulum to the Golgi. This Cricetulus griseus (Chinese hamster) protein is Metallophosphoesterase 1.